The following is a 410-amino-acid chain: Peptidase T (410 aa).

Residue His79 participates in Zn(2+) binding. Asp81 is an active-site residue. A Zn(2+)-binding site is contributed by Asp142. Glu176 acts as the Proton acceptor in catalysis. Residues Glu177, Asp199, and His381 each coordinate Zn(2+).

This sequence belongs to the peptidase M20B family. Requires Zn(2+) as cofactor.

It is found in the cytoplasm. It catalyses the reaction Release of the N-terminal residue from a tripeptide.. Functionally, cleaves the N-terminal amino acid of tripeptides. In Bacillus mycoides (strain KBAB4) (Bacillus weihenstephanensis), this protein is Peptidase T.